The sequence spans 335 residues: Cytoskeleton protein RodZ (335 aa).

Residues 1–111 are Cytoplasmic-facing; sequence MNTEATHDQN…LGKRRKKRDG (111 aa). The 53-residue stretch at 19–71 folds into the HTH cro/C1-type domain; the sequence is LRNAREQLGLSQQAVAERLCLKVSTVRDIEEDKAPADLASTFLRGYIRSYARL. The H-T-H motif DNA-binding region spans 30-49; the sequence is QQAVAERLCLKVSTVRDIEE. Residues 112 to 132 form a helical; Signal-anchor for type II membrane protein membrane-spanning segment; sequence WLMTFTWLVLFVVIGLSGAWW. Residues 133 to 335 lie on the Periplasmic side of the membrane; that stretch reads WQDHKAQQEE…TLNAEQSPAQ (203 aa). The segment covering 148–164 has biased composition (polar residues); the sequence is DQSSAELNNNQSQSVPL. A disordered region spans residues 148 to 244; it reads DQSSAELNNN…PLPTDQAGVT (97 aa). 2 stretches are compositionally biased toward low complexity: residues 165–205 and 217–239; these read DTST…DPQQ and DTAATPAPAATTTPDGAAPLPTD.

The protein belongs to the RodZ family.

Its subcellular location is the cell inner membrane. Functionally, cytoskeletal protein that is involved in cell-shape control through regulation of the length of the long axis. The sequence is that of Cytoskeleton protein RodZ from Escherichia coli O6:H1 (strain CFT073 / ATCC 700928 / UPEC).